Reading from the N-terminus, the 203-residue chain is Ribosomal RNA large subunit methyltransferase E (203 aa).

G59, W61, D79, D97, and D119 together coordinate S-adenosyl-L-methionine. K159 functions as the Proton acceptor in the catalytic mechanism.

Belongs to the class I-like SAM-binding methyltransferase superfamily. RNA methyltransferase RlmE family.

It localises to the cytoplasm. It catalyses the reaction uridine(2552) in 23S rRNA + S-adenosyl-L-methionine = 2'-O-methyluridine(2552) in 23S rRNA + S-adenosyl-L-homocysteine + H(+). In terms of biological role, specifically methylates the uridine in position 2552 of 23S rRNA at the 2'-O position of the ribose in the fully assembled 50S ribosomal subunit. This Desulforapulum autotrophicum (strain ATCC 43914 / DSM 3382 / VKM B-1955 / HRM2) (Desulfobacterium autotrophicum) protein is Ribosomal RNA large subunit methyltransferase E.